Consider the following 429-residue polypeptide: Glutamate-1-semialdehyde 2,1-aminomutase 2 (429 aa).

Residue Lys268 is modified to N6-(pyridoxal phosphate)lysine.

Belongs to the class-III pyridoxal-phosphate-dependent aminotransferase family. HemL subfamily. As to quaternary structure, homodimer. Pyridoxal 5'-phosphate is required as a cofactor.

The protein resides in the cytoplasm. It carries out the reaction (S)-4-amino-5-oxopentanoate = 5-aminolevulinate. It functions in the pathway porphyrin-containing compound metabolism; protoporphyrin-IX biosynthesis; 5-aminolevulinate from L-glutamyl-tRNA(Glu): step 2/2. The polypeptide is Glutamate-1-semialdehyde 2,1-aminomutase 2 (Staphylococcus aureus (strain Mu50 / ATCC 700699)).